A 239-amino-acid chain; its full sequence is Purine nucleoside phosphorylase DeoD-type (239 aa).

His-5 serves as a coordination point for a purine D-ribonucleoside. Phosphate-binding positions include Gly-21, Arg-25, Arg-44, and 89 to 92 (RVGS). A purine D-ribonucleoside-binding positions include 180-182 (EME) and 204-205 (SD). The Proton donor role is filled by Asp-205.

This sequence belongs to the PNP/UDP phosphorylase family. Homohexamer; trimer of homodimers.

The enzyme catalyses a purine D-ribonucleoside + phosphate = a purine nucleobase + alpha-D-ribose 1-phosphate. It catalyses the reaction a purine 2'-deoxy-D-ribonucleoside + phosphate = a purine nucleobase + 2-deoxy-alpha-D-ribose 1-phosphate. Catalyzes the reversible phosphorolytic breakdown of the N-glycosidic bond in the beta-(deoxy)ribonucleoside molecules, with the formation of the corresponding free purine bases and pentose-1-phosphate. This is Purine nucleoside phosphorylase DeoD-type from Klebsiella pneumoniae.